We begin with the raw amino-acid sequence, 497 residues long: Putative diacyglycerol O-acyltransferase Rv3480c (497 aa).

The active-site Proton acceptor is the His143.

It belongs to the long-chain O-acyltransferase family.

The catalysed reaction is an acyl-CoA + a 1,2-diacyl-sn-glycerol = a triacyl-sn-glycerol + CoA. It catalyses the reaction di-(9Z)-octadecenoylglycerol + (9Z)-octadecenoyl-CoA = 1,2,3-tri-(9Z-octadecenoyl)-glycerol + CoA. It carries out the reaction hexadecan-1-ol + hexadecanoyl-CoA = hexadecanyl hexadecanoate + CoA. Its pathway is glycerolipid metabolism; triacylglycerol biosynthesis. Its function is as follows. Upon expression in E.coli has a weak triacylglycerol synthase function, making triacylglycerol (TG) from diolein and long-chain fatty acyl-CoA. Also functions weakly as a wax synthase, as it incorporates palmityl alcohol into wax esters in the presence of palmitoyl-CoA. This Mycobacterium tuberculosis (strain ATCC 25618 / H37Rv) protein is Putative diacyglycerol O-acyltransferase Rv3480c.